A 259-amino-acid polypeptide reads, in one-letter code: DNA repair protein RecO (259 aa).

Belongs to the RecO family.

Involved in DNA repair and RecF pathway recombination. This Chloroherpeton thalassium (strain ATCC 35110 / GB-78) protein is DNA repair protein RecO.